The chain runs to 133 residues: Cytochrome c-type biogenesis protein CcmE (133 aa).

Topologically, residues 1–7 are cytoplasmic; the sequence is MKRKHKR. A helical; Signal-anchor for type II membrane protein membrane pass occupies residues 8 to 28; it reads LLFIIVTFIIFGSSVVIVLNK. Residues 29 to 133 are Periplasmic-facing; the sequence is LRSNISFFFT…NYKPGKYRAK (105 aa). Positions 121 and 125 each coordinate heme.

Belongs to the CcmE/CycJ family.

It is found in the cell inner membrane. Its function is as follows. Heme chaperone required for the biogenesis of c-type cytochromes. Transiently binds heme delivered by CcmC and transfers the heme to apo-cytochromes in a process facilitated by CcmF and CcmH. The polypeptide is Cytochrome c-type biogenesis protein CcmE (Ehrlichia canis (strain Jake)).